Consider the following 519-residue polypeptide: Putative thymidine phosphorylase (519 aa).

Belongs to the thymidine/pyrimidine-nucleoside phosphorylase family. Type 2 subfamily.

The enzyme catalyses thymidine + phosphate = 2-deoxy-alpha-D-ribose 1-phosphate + thymine. This chain is Putative thymidine phosphorylase, found in Maricaulis maris (strain MCS10) (Caulobacter maris).